Here is a 1049-residue protein sequence, read N- to C-terminus: Protein phosphatase Slingshot homolog 1 (1049 aa).

A compositionally biased stretch (polar residues) spans 1 to 12 (MALVTLQRSPTP). Residues 1–28 (MALVTLQRSPTPSAASSSASNSELEAGS) are disordered. Position 2 is an N-acetylalanine (Ala2). Over residues 13-25 (SAASSSASNSELE) the composition is skewed to low complexity. Ser37 and Ser57 each carry phosphoserine. The region spanning 249-304 (ERTERLIKAKLRSIMMSQDLENVTSKEIRNELEKQMNCNLKELKEFIDNEMLLILG) is the DEK-C domain. The Tyrosine-protein phosphatase domain occupies 308-449 (KPSLIFDHLY…LSEYEGILDA (142 aa)). Cys393 acts as the Phosphocysteine intermediate in catalysis. The disordered stretch occupies residues 456 to 499 (KLWRQQTDSSLQQPVDDPAGPGDFLPETPDGTPESQLPFLDDAA). Positions 458–468 (WRQQTDSSLQQ) are enriched in polar residues. At Ser515 the chain carries Phosphoserine. Disordered regions lie at residues 544–603 (AAPP…RWGQ), 693–787 (HLAS…KPAK), 825–899 (HTKE…KSPP), and 923–955 (PTSSSMSSNLTRSSSSDSIHSVRGKPGLVKQRT). Over residues 564–573 (CEKDVKKKLE) the composition is skewed to basic and acidic residues. Residue Ser576 is modified to Phosphoserine. The segment covering 731 to 742 (GAALEPPASLLE) has biased composition (low complexity). Over residues 772–787 (VIKEESSPKKDMKPAK) the composition is skewed to basic and acidic residues. Phosphoserine is present on Ser897. Positions 897 to 1049 (SPPPFFYRLD…LKSPSWMSKS (153 aa)) are interaction with YWHAG. Residues 925-943 (SSSMSSNLTRSSSSDSIHS) are compositionally biased toward low complexity. Ser978 bears the Phosphoserine mark. Residues 989 to 1049 (TEDLSSEADP…LKSPSWMSKS (61 aa)) form a disordered region. Residues 1001–1013 (VADSQDTTLSESS) show a composition bias toward polar residues.

This sequence belongs to the protein-tyrosine phosphatase family. In terms of assembly, interacts with actin and this stimulates phosphatase activity. Also interacts with LIMK1 and with the 14-3-3 proteins YWHAB, YWHAG, YWHAQ, and YWHAZ. Interaction with 14-3-3 proteins inhibits phosphatase activity and also blocks recruitment to lamellipodia and stimulation by actin. In terms of processing, phosphorylated. Inhibitory phosphorylation by PAK4 promotes binding to YWHAZ. Phosphorylation at Ser-978 is decreased by stimuli which promote actin reorganization and lamellipodia formation. Can be dephosphorylated and activated by PPP3CA/calcineurin A. Phosphorylation decreases immediately prior to telophase.

It is found in the cytoplasm. The protein localises to the cytoskeleton. The protein resides in the cell projection. It localises to the lamellipodium. Its subcellular location is the cleavage furrow. It is found in the midbody. It carries out the reaction O-phospho-L-tyrosyl-[protein] + H2O = L-tyrosyl-[protein] + phosphate. It catalyses the reaction O-phospho-L-seryl-[protein] + H2O = L-seryl-[protein] + phosphate. The catalysed reaction is O-phospho-L-threonyl-[protein] + H2O = L-threonyl-[protein] + phosphate. Its function is as follows. Protein phosphatase which regulates actin filament dynamics. Dephosphorylates and activates the actin binding/depolymerizing factor cofilin, which subsequently binds to actin filaments and stimulates their disassembly. Inhibitory phosphorylation of cofilin is mediated by LIMK1, which may also be dephosphorylated and inactivated by this protein. The protein is Protein phosphatase Slingshot homolog 1 of Homo sapiens (Human).